Consider the following 272-residue polypeptide: Aurora kinase (272 aa).

A Protein kinase domain is found at 10–263; sequence FEIGRLLGRG…LTEALNHPFI (254 aa). Residues 16–24 and K39 each bind ATP; that span reads LGRGKFGQV. Residue D134 is the Proton acceptor of the active site.

This sequence belongs to the protein kinase superfamily. Ser/Thr protein kinase family. Aurora subfamily.

Its subcellular location is the nucleus. The protein localises to the cytoplasm. It localises to the cytoskeleton. The protein resides in the spindle. It is found in the chromosome. Its subcellular location is the centromere. The protein localises to the kinetochore. It catalyses the reaction L-seryl-[protein] + ATP = O-phospho-L-seryl-[protein] + ADP + H(+). It carries out the reaction L-threonyl-[protein] + ATP = O-phospho-L-threonyl-[protein] + ADP + H(+). Functionally, component of the chromosomal passenger complex (CPC), a complex that acts as a key regulator of chromosome segregation and cytokinesis. Has a role in error-correction of aberrent kinetochore-microtubule attachments to ensure that sister kinetochores become bioriented and connect to opposite poles by promoting spindle assembly checkpoint signaling. The polypeptide is Aurora kinase (IPL1) (Encephalitozoon cuniculi (strain GB-M1) (Microsporidian parasite)).